The sequence spans 125 residues: DNA-directed RNA polymerases I and III subunit RPAC2 (125 aa).

Belongs to the archaeal Rpo11/eukaryotic RPB11/RPC19 RNA polymerase subunit family. As to quaternary structure, component of the RNA polymerase I (Pol I) and RNA polymerase III (Pol III) complexes consisting of 14 and 17 subunits, respectively.

It is found in the nucleus. Functionally, DNA-dependent RNA polymerase catalyzes the transcription of DNA into RNA using the four ribonucleoside triphosphates as substrates. Common core component of RNA polymerases I and III which synthesize ribosomal RNA precursors and small RNAs, such as 5S rRNA and tRNAs, respectively. This is DNA-directed RNA polymerases I and III subunit RPAC2 (rpc19) from Schizosaccharomyces pombe (strain 972 / ATCC 24843) (Fission yeast).